Consider the following 565-residue polypeptide: NAD-dependent malic enzyme (565 aa).

Tyr-104 serves as the catalytic Proton donor. Position 157 (Arg-157) interacts with NAD(+). The Proton acceptor role is filled by Lys-175. Glu-246, Asp-247, and Asp-270 together coordinate a divalent metal cation. The NAD(+) site is built by Asp-270 and Asn-418.

Belongs to the malic enzymes family. As to quaternary structure, homotetramer. It depends on Mg(2+) as a cofactor. The cofactor is Mn(2+).

The enzyme catalyses (S)-malate + NAD(+) = pyruvate + CO2 + NADH. It carries out the reaction oxaloacetate + H(+) = pyruvate + CO2. This Klebsiella pneumoniae subsp. pneumoniae (strain ATCC 700721 / MGH 78578) protein is NAD-dependent malic enzyme.